A 140-amino-acid polypeptide reads, in one-letter code: MEGDQYLASFNFPAMERKPKVAGLAVLLGEVSELELQKICFNRSLRNEINQLEEQNDISFVRVERKGVYGGVYLSYRVASAKDCEKLAKYYNLKASQRGYKPLSQADINEAMNRFHYVDPLAVVDGERIVQKPSRTKANI.

Positions 27–65 (LLGEVSELELQKICFNRSLRNEINQLEEQNDISFVRVER) form a coiled coil.

This is an uncharacterized protein from Pasteurella multocida (strain Pm70).